A 333-amino-acid polypeptide reads, in one-letter code: DNA-3-methyladenine glycosylase (333 aa).

The segment covering 1–14 (MPARGGSARPGRGA) has biased composition (low complexity). A disordered region spans residues 1 to 42 (MPARGGSARPGRGALKPVSVTLLPDTEQPPFLGRARRPGNAR). 2 positions are modified to phosphoserine: Ser-98 and Ser-272.

This sequence belongs to the DNA glycosylase MPG family. Binds MBD1. Binds SSBP1.

The protein resides in the cytoplasm. The protein localises to the mitochondrion matrix. Its subcellular location is the mitochondrion nucleoid. It is found in the nucleus. The catalysed reaction is Hydrolysis of alkylated DNA, releasing 3-methyladenine, 3-methylguanine, 7-methylguanine and 7-methyladenine.. Its activity is regulated as follows. Binding to SSBP1 in mitochondria inhibits glycosylase activity in the context of a single-stranded DNA (ssDNA), but not a double-stranded DNA (dsDNA) substrates. In terms of biological role, hydrolysis of the deoxyribose N-glycosidic bond to excise 3-methyladenine, and 7-methylguanine from the damaged DNA polymer formed by alkylation lesions. This is DNA-3-methyladenine glycosylase (Mpg) from Mus musculus (Mouse).